A 349-amino-acid chain; its full sequence is 1-acylglycerol-3-phosphate O-acyltransferase ABHD5 (349 aa).

Position 2 is an N-acetylalanine (Ala2). The region spanning 77–184 (PLVLLHGFGG…LVEPWGFPER (108 aa)) is the AB hydrolase-1 domain. Ser122 is subject to Phosphoserine. An HXXXXD motif motif is present at residues 327-332 (HYVYAD).

It belongs to the peptidase S33 family. ABHD4/ABHD5 subfamily. As to quaternary structure, interacts with ADRP, PLIN and PNPLA2. Interacts with PLIN5; promotes interaction with PNPLA2.

It localises to the cytoplasm. The protein localises to the lipid droplet. It carries out the reaction a 1-acyl-sn-glycero-3-phosphate + an acyl-CoA = a 1,2-diacyl-sn-glycero-3-phosphate + CoA. It catalyses the reaction 1-(9Z-octadecenoyl)-sn-glycero-3-phosphate + (9Z)-octadecenoyl-CoA = 1,2-di-(9Z-octadecenoyl)-sn-glycero-3-phosphate + CoA. The catalysed reaction is 1-(9Z-octadecenoyl)-sn-glycero-3-phosphate + hexadecanoyl-CoA = 1-(9Z)-octadecenoyl-2-hexadecanoyl-sn-glycero-3-phosphate + CoA. The enzyme catalyses 1-(9Z-octadecenoyl)-sn-glycero-3-phosphate + octadecanoyl-CoA = 1-(9Z-octadecenoyl)-2-octadecanoyl-sn-glycero-3-phosphate + CoA. It carries out the reaction 1-(9Z-octadecenoyl)-sn-glycero-3-phosphate + (5Z,8Z,11Z,14Z)-eicosatetraenoyl-CoA = 1-(9Z)-octadecenoyl-2-(5Z,8Z,11Z,14Z)-eicosatetraenoyl-sn-glycero-3-phosphate + CoA. It catalyses the reaction eicosanoyl-CoA + 1-(9Z-octadecenoyl)-sn-glycero-3-phosphate = 1-(9Z)-octadecenoyl-2-eicosanoyl-sn-glycero-3-phosphate + CoA. The catalysed reaction is 1-hexadecanoyl-sn-glycero-3-phosphate + (9Z)-octadecenoyl-CoA = 1-hexadecanoyl-2-(9Z-octadecenoyl)-sn-glycero-3-phosphate + CoA. The enzyme catalyses 1-octadecanoyl-sn-glycero-3-phosphate + (9Z)-octadecenoyl-CoA = 1-octadecanoyl-2-(9Z-octadecenoyl)-sn-glycero-3-phosphate + CoA. It carries out the reaction 1-(5Z,8Z,11Z,14Z-eicosatetraenoyl)-sn-glycero-3-phosphate + (9Z)-octadecenoyl-CoA = 1-(5Z,8Z,11Z,14Z)-eicosatetraenoyl-2-(9Z)-octadecenoyl-sn-glycero-3-phosphate + CoA. Its activity is regulated as follows. Acyltransferase activity is inhibited by detergents such as Triton X-100 and 3-[(3-cholamidopropyl)dimethylammonio]-1-propanesulfonate (CHAPS). Acyltransferase activity is inhibited by the presence of magnesium and calcium. Coenzyme A-dependent lysophosphatidic acid acyltransferase that catalyzes the transfer of an acyl group on a lysophosphatidic acid. Functions preferentially with 1-oleoyl-lysophosphatidic acid followed by 1-palmitoyl-lysophosphatidic acid, 1-stearoyl-lysophosphatidic acid and 1-arachidonoyl-lysophosphatidic acid as lipid acceptor. Functions preferentially with arachidonoyl-CoA followed by oleoyl-CoA as acyl group donors. Functions in phosphatidic acid biosynthesis. May regulate the cellular storage of triacylglycerol through activation of the phospholipase PNPLA2. Involved in keratinocyte differentiation. Regulates lipid droplet fusion. The protein is 1-acylglycerol-3-phosphate O-acyltransferase ABHD5 of Pongo abelii (Sumatran orangutan).